The primary structure comprises 168 residues: Peptide methionine sulfoxide reductase 2 (168 aa).

One can recognise a MsrB domain in the interval 40-168; the sequence is DVKWNDALTP…NSASLNLKKD (129 aa). 4 residues coordinate Zn(2+): C79, C82, C128, and C131. C97 and C157 are disulfide-bonded. C157 (nucleophile) is an active-site residue.

This sequence belongs to the MsrB Met sulfoxide reductase family. Zn(2+) serves as cofactor.

The catalysed reaction is L-methionyl-[protein] + [thioredoxin]-disulfide + H2O = L-methionyl-(R)-S-oxide-[protein] + [thioredoxin]-dithiol. Its function is as follows. Methionine-R-sulfoxide reductase which catalyzes the reduction of methionine sulfoxide (MetSO) to methionine in proteins. Plays a protective role against oxidative stress by restoring activity to proteins that have been inactivated by methionine oxidation. Protects iron-sulfur clusters from oxidative inactivation along with MXR1. Involved in the regulation of lifespan. The polypeptide is Peptide methionine sulfoxide reductase 2 (MXR2) (Saccharomyces cerevisiae (strain ATCC 204508 / S288c) (Baker's yeast)).